The primary structure comprises 338 residues: MKIYYDKDCNLSLLKGKKVAIIGYGSQGHAHANNLKDSGIDVVVGLKADSASVKKATEAGLTVLTTSEAVKIADIIMILLPDEIQGDVYREEIAPYVKQGAYLAFGHGFNIHFGQIVPRHDINVIMVAPKGPGHLVRHEYTKGGGVPSLIAIHHDPSGNSRDVALAYASANGGGKAGIIETSFKEETETDLFGEQAVLCGGISALIQAGFETLVEAGYAPEMAYFECLHETKLIVDLIYEGGIANMRYSVSNTAEYGDLTRGPRVITGETKKEMKKILTEIQEGEFAREWMLENKVNNPRFNALRRKGTEHQIEEVGARLRSMMAWIGKSKIVDKTKN.

A KARI N-terminal Rossmann domain is found at 1 to 181; it reads MKIYYDKDCN…GGGKAGIIET (181 aa). NADP(+) contacts are provided by residues 24–27, Lys-47, Ser-50, Ser-52, and 82–85; these read YGSQ and DEIQ. Residue His-107 is part of the active site. Gly-133 is a binding site for NADP(+). Positions 182–327 constitute a KARI C-terminal knotted domain; sequence SFKEETETDL…ARLRSMMAWI (146 aa). Residues Asp-190, Glu-194, Glu-226, and Glu-230 each contribute to the Mg(2+) site. Ser-251 lines the substrate pocket.

This sequence belongs to the ketol-acid reductoisomerase family. The cofactor is Mg(2+).

It carries out the reaction (2R)-2,3-dihydroxy-3-methylbutanoate + NADP(+) = (2S)-2-acetolactate + NADPH + H(+). The enzyme catalyses (2R,3R)-2,3-dihydroxy-3-methylpentanoate + NADP(+) = (S)-2-ethyl-2-hydroxy-3-oxobutanoate + NADPH + H(+). It functions in the pathway amino-acid biosynthesis; L-isoleucine biosynthesis; L-isoleucine from 2-oxobutanoate: step 2/4. Its pathway is amino-acid biosynthesis; L-valine biosynthesis; L-valine from pyruvate: step 2/4. Its function is as follows. Involved in the biosynthesis of branched-chain amino acids (BCAA). Catalyzes an alkyl-migration followed by a ketol-acid reduction of (S)-2-acetolactate (S2AL) to yield (R)-2,3-dihydroxy-isovalerate. In the isomerase reaction, S2AL is rearranged via a Mg-dependent methyl migration to produce 3-hydroxy-3-methyl-2-ketobutyrate (HMKB). In the reductase reaction, this 2-ketoacid undergoes a metal-dependent reduction by NADPH to yield (R)-2,3-dihydroxy-isovalerate. This chain is Ketol-acid reductoisomerase (NADP(+)), found in Geotalea uraniireducens (strain Rf4) (Geobacter uraniireducens).